A 322-amino-acid polypeptide reads, in one-letter code: Ferredoxin--NADP reductase (322 aa).

Positions 34, 42, 47, 87, 120, 279, and 320 each coordinate FAD.

It belongs to the ferredoxin--NADP reductase type 2 family. In terms of assembly, homodimer. The cofactor is FAD.

It catalyses the reaction 2 reduced [2Fe-2S]-[ferredoxin] + NADP(+) + H(+) = 2 oxidized [2Fe-2S]-[ferredoxin] + NADPH. The chain is Ferredoxin--NADP reductase from Streptococcus pneumoniae serotype 2 (strain D39 / NCTC 7466).